Consider the following 124-residue polypeptide: Small ribosomal subunit protein uS12 (124 aa).

The residue at position 89 (D89) is a 3-methylthioaspartic acid. Positions 102 to 124 (LDTSGVNNRKHGRSKYGTKRPKS) are disordered. The segment covering 109–124 (NRKHGRSKYGTKRPKS) has biased composition (basic residues).

Belongs to the universal ribosomal protein uS12 family. As to quaternary structure, part of the 30S ribosomal subunit. Contacts proteins S8 and S17. May interact with IF1 in the 30S initiation complex.

Functionally, with S4 and S5 plays an important role in translational accuracy. In terms of biological role, interacts with and stabilizes bases of the 16S rRNA that are involved in tRNA selection in the A site and with the mRNA backbone. Located at the interface of the 30S and 50S subunits, it traverses the body of the 30S subunit contacting proteins on the other side and probably holding the rRNA structure together. The combined cluster of proteins S8, S12 and S17 appears to hold together the shoulder and platform of the 30S subunit. The polypeptide is Small ribosomal subunit protein uS12 (Francisella tularensis subsp. tularensis (strain FSC 198)).